The following is a 392-amino-acid chain: MEIKDIIINSNLMLPPPTILTINNKDDYTSFTFKGKSISVPRKQRITKKTIYACDINGTMFQTYNMDTNRLLIIKKISLLQFKNHLQGRMMLRNCHYQRFFNHHPFVSGFKVSKRKSLNIKTKNLIESPVDDGTDLYFEFDQSDFTLYQMIRSDKAASRKQCPYVLYQLLTTIKYINSAGVIHRSLDPKTIAVNKEYKTKLFDFSFSISTDYPTDIFFKDYEETPWPYRSPETIIMLKEFSFECDVWSIGVIFAELILGEQLFRGESKQSLLIEISELIGTPTYDECKESTNGFARNFILNIPLKSRHGGIKKRIPNATEEEIEILEGMLCWNPKKRWPIERIIQHPYFQNYCHIEQYKCDKKFSLGSPYVFHRLNAKEIKKIIEDEFVTQP.

Residues 46-349 (ITKKTIYACD…IERIIQHPYF (304 aa)) enclose the Protein kinase domain. ATP-binding positions include 52-60 (YACDINGTM) and K75.

It belongs to the protein kinase superfamily. CMGC Ser/Thr protein kinase family. MAP kinase subfamily.

The sequence is that of Probable inactive serine/threonine-protein kinase DDB_G0280855 from Dictyostelium discoideum (Social amoeba).